A 354-amino-acid chain; its full sequence is Vascular endothelial growth factor D (354 aa).

Residues 1–21 form the signal peptide; it reads MYREWVVVNVFMMLYVQLVQG. The propeptide at 22–88 is or 99 (in a minor form); the sequence is SSNEHGPVKR…SRSASHRSTR (67 aa). Disulfide bonds link cysteine 111-cysteine 153, cysteine 142-cysteine 189, and cysteine 146-cysteine 191. Asparagine 155 and asparagine 185 each carry an N-linked (GlcNAc...) asparagine glycan. Residues 206 to 354 constitute a propeptide that is removed on maturation; the sequence is SIQIPEEDRC…AQGPHSRKNP (149 aa). A 1; approximate repeat occupies 222 to 237; sequence CPIDMLWDSNKCKCVL. The interval 222 to 318 is 4 X 16 AA repeats of C-X(10)-C-X-C-X(1,3)-C; the sequence is CPIDMLWDSN…PDTCSCEDRC (97 aa). A run of 3 repeats spans residues 258–273, 277–293, and 301–318. Asparagine 287 is a glycosylation site (N-linked (GlcNAc...) asparagine).

The protein belongs to the PDGF/VEGF growth factor family. In terms of assembly, homodimer; non-covalent and antiparallel. Post-translationally, undergoes a complex proteolytic maturation which generates a variety of processed secreted forms with increased activity toward VEGFR-3 and VEGFR-2. VEGF-D first form an antiparallel homodimer linked by disulfide bonds before secretion. The fully processed VEGF-D is composed mostly of two VEGF homology domains (VHDs) bound by non-covalent interactions. As to expression, highly expressed in lung, heart, small intestine and fetal lung, and at lower levels in skeletal muscle, colon, and pancreas.

The protein resides in the secreted. In terms of biological role, growth factor active in angiogenesis, lymphangiogenesis and endothelial cell growth, stimulating their proliferation and migration and also has effects on the permeability of blood vessels. May function in the formation of the venous and lymphatic vascular systems during embryogenesis, and also in the maintenance of differentiated lymphatic endothelium in adults. Binds and activates VEGFR-2 (KDR/FLK1) and VEGFR-3 (FLT4) receptors. The polypeptide is Vascular endothelial growth factor D (Homo sapiens (Human)).